The primary structure comprises 572 residues: Hexokinase (572 aa).

In terms of domain architecture, Hexokinase spans aspartate 49–alanine 492. The tract at residues asparagine 105 to isoleucine 237 is hexokinase small subdomain. Residues aspartate 116–threonine 120 and serine 185 each bind D-glucose 6-phosphate. ATP is bound at residue aspartate 116–asparagine 121. Substrate is bound by residues serine 185–tyrosine 186, threonine 202–lysine 203, and asparagine 238–aspartate 239. Residues asparagine 238 to aspartate 481 are hexokinase large subdomain. D-glucose 6-phosphate contacts are provided by aspartate 239 and threonine 263. Threonine 263 provides a ligand contact to ATP. Substrate-binding residues include asparagine 266, glutamate 297, and aspartate 331. ATP is bound by residues glycine 336–lysine 337, threonine 373–serine 377, and serine 448–tyrosine 452. D-glucose 6-phosphate is bound by residues aspartate 446–serine 448 and serine 483.

It belongs to the hexokinase family.

The enzyme catalyses a D-hexose + ATP = a D-hexose 6-phosphate + ADP + H(+). It carries out the reaction D-mannose + ATP = D-mannose 6-phosphate + ADP + H(+). It catalyses the reaction D-fructose + ATP = D-fructose 6-phosphate + ADP + H(+). The catalysed reaction is D-glucose + ATP = D-glucose 6-phosphate + ADP + H(+). Its pathway is carbohydrate metabolism; hexose metabolism. It functions in the pathway carbohydrate degradation; glycolysis; D-glyceraldehyde 3-phosphate and glycerone phosphate from D-glucose: step 1/4. Activated by glucose-6-phosphate. Inhibited by N-acetylglucosamine, glucosamine, mannoheptulose and ADP. Its function is as follows. Active against glucose, fructose, mannose, maltose and galactose. In Brugia malayi (Filarial nematode worm), this protein is Hexokinase.